A 456-amino-acid chain; its full sequence is NAD-dependent deacetylase sir2C (456 aa).

The 283-residue stretch at 161-443 (IEIENNKIKE…LNLSKLLNWD (283 aa)) folds into the Deacetylase sirtuin-type domain. H294 acts as the Proton acceptor in catalysis. Positions 302, 305, 331, and 336 each coordinate Zn(2+).

Belongs to the sirtuin family. Zn(2+) is required as a cofactor.

It catalyses the reaction N(6)-acetyl-L-lysyl-[protein] + NAD(+) + H2O = 2''-O-acetyl-ADP-D-ribose + nicotinamide + L-lysyl-[protein]. Functionally, NAD-dependent deacetylase, which plays an important role in the regulation of transcriptional repression. The polypeptide is NAD-dependent deacetylase sir2C (sir2C) (Dictyostelium discoideum (Social amoeba)).